We begin with the raw amino-acid sequence, 705 residues long: Crooked neck-like protein 1 (705 aa).

HAT repeat units follow at residues 55 to 87 (DYRLRKRQQYESLLGRNRKTAAIYIKYAAWEES), 89 to 121 (KDLTRARSVFERFLDIDHRIPTVWIKYAEMEMK), 123 to 155 (KNINLARNIWDRAVCLLPRVSQLWFKYTFMEDM), 157 to 188 (GNYPAARAIFERWMQWKPEPQAWNSYLKFEQR), 190 to 221 (KLFENTRLIFEKYILVHPYIKTWIKYTKFEER), 223 to 258 (GNIENARTIFQRAIEFLGEDGNDEQLFIAFAKFEEK), 260 to 294 (KEIERARVIYKYAIDHVPKSRAKDLFDTFTNFEKQ), 304 to 336 (VVLGKKRFQYEEEIKKNSKNYDIWFDYLKMEEI), 338 to 372 (GEIEKTREIYERSIGNLPPTNEKKHWKRYIYLWIN), 382 to 418 (KDMERARSVYSECIKLIPHKEFSFSKIWILYANFEIR), 420 to 451 (LNLDKARLIYGQAIGRNPKSKIFDQYIHLEIE), 453 to 485 (GNFDRVRTLYEKYLEIMPDNCDAWCKFAQLETE), 487 to 521 (GETVRARAIFELAIQQPNLDRPEVVWKDFIDSEIQ), and 523 to 554 (KQFDFVKQLYRKLLEKTNHVKVWIGFIKFVHS). Residues 559–591 (QQQKQRQQQQEEDGDSNTTKKDGGDDDNNDDIN) form a disordered region. The stretch at 597–629 (IFIEAHKSLSNSDKEERLLLLESWKEFEQTFGN) is one HAT 15 repeat.

It belongs to the crooked-neck family. Identified in the spliceosome C complex.

The protein localises to the nucleus. The protein resides in the nucleus speckle. Functionally, involved in pre-mRNA splicing process. This is Crooked neck-like protein 1 (crnkl1) from Dictyostelium discoideum (Social amoeba).